The chain runs to 329 residues: Ketol-acid reductoisomerase (NADP(+)) (329 aa).

Positions 1-181 (MKVYYENDAD…GATRSGVLQT (181 aa)) constitute a KARI N-terminal Rossmann domain. Residues 24–27 (YGSQ), Arg47, and 82–85 (DQVQ) contribute to the NADP(+) site. The active site involves His107. Gly133 provides a ligand contact to NADP(+). Residues 182-327 (TFREETETDL…GELRKMMSWL (146 aa)) enclose the KARI C-terminal knotted domain. Mg(2+) is bound by residues Asp190, Glu194, Glu226, and Glu230. Ser251 contributes to the substrate binding site.

This sequence belongs to the ketol-acid reductoisomerase family. It depends on Mg(2+) as a cofactor.

It catalyses the reaction (2R)-2,3-dihydroxy-3-methylbutanoate + NADP(+) = (2S)-2-acetolactate + NADPH + H(+). The catalysed reaction is (2R,3R)-2,3-dihydroxy-3-methylpentanoate + NADP(+) = (S)-2-ethyl-2-hydroxy-3-oxobutanoate + NADPH + H(+). It participates in amino-acid biosynthesis; L-isoleucine biosynthesis; L-isoleucine from 2-oxobutanoate: step 2/4. The protein operates within amino-acid biosynthesis; L-valine biosynthesis; L-valine from pyruvate: step 2/4. Involved in the biosynthesis of branched-chain amino acids (BCAA). Catalyzes an alkyl-migration followed by a ketol-acid reduction of (S)-2-acetolactate (S2AL) to yield (R)-2,3-dihydroxy-isovalerate. In the isomerase reaction, S2AL is rearranged via a Mg-dependent methyl migration to produce 3-hydroxy-3-methyl-2-ketobutyrate (HMKB). In the reductase reaction, this 2-ketoacid undergoes a metal-dependent reduction by NADPH to yield (R)-2,3-dihydroxy-isovalerate. This is Ketol-acid reductoisomerase (NADP(+)) from Maridesulfovibrio salexigens (strain ATCC 14822 / DSM 2638 / NCIMB 8403 / VKM B-1763) (Desulfovibrio salexigens).